The primary structure comprises 350 residues: MRVKAPGRINIIGEHTDYNDGYVLPFAVNRFVFLTIEDSGKFVFHSENMNETVEMEKIEKLNRWTDYISGVIKAFEKRGYKVSPVKISVSSNLPMGAGLSSSAALEMATAYAISEHFGFHLPKLELVKIAREAEVEFVGVRCGIMDQFTSAFGKKDHAIFLDTMTLEYEYVPLKLEGYEINLVDSNVKHELSSSEYNKRRQECEEVLRVLGKRSFREVTKEDLKKLPDVLKKRAQHVLEENERVLKSVQALKEGDFETLGRLLFSSHESLRDLYEVSCEETDFIVDFLKGREGILGARMVGGGFGGGVIVLSKKGAFEKIKEELKNAYRDRFKIELTFHEIESADGVQKI.

Position 14–17 (14–17 (EHTD)) interacts with substrate. Residues S46 and 96 to 102 (GAGLSSS) each bind ATP. Positions 102 and 134 each coordinate Mg(2+). D146 serves as the catalytic Proton acceptor. Y196 contacts substrate.

This sequence belongs to the GHMP kinase family. GalK subfamily.

The protein resides in the cytoplasm. It catalyses the reaction alpha-D-galactose + ATP = alpha-D-galactose 1-phosphate + ADP + H(+). Its pathway is carbohydrate metabolism; galactose metabolism. Catalyzes the transfer of the gamma-phosphate of ATP to D-galactose to form alpha-D-galactose-1-phosphate (Gal-1-P). In Thermotoga neapolitana (strain ATCC 49049 / DSM 4359 / NBRC 107923 / NS-E), this protein is Galactokinase.